Consider the following 422-residue polypeptide: SPbeta prophage-derived glycosyltransferase SunS (422 aa).

The protein belongs to the glycosyltransferase 2 family.

Its function is as follows. Transfers a hexose moiety onto 'Cys-41' of bacteriocin sublancin-168 (SunA). Accepts UDP-glucose (UDP-Glc), UDP-N-acetylglucosamine (UDP-GlcNAc), UDP-galactose (UDP-Gal), UDP-xylose (UDP-Xyl) and GDP-mannose as substrate. This chain is SPbeta prophage-derived glycosyltransferase SunS (sunS), found in Bacillus subtilis (strain 168).